Reading from the N-terminus, the 421-residue chain is Probable G-protein coupled receptor 151 (421 aa).

Over 1–44 (MGKATLAVFADSDSSNMNESFAHLHFAGGYLPSDSKGWRTIIPS) the chain is Extracellular. N-linked (GlcNAc...) asparagine glycosylation occurs at Asn18. Residues 45–65 (LLAAVCLVGFVGNLCVIGLLL) traverse the membrane as a helical segment. Topologically, residues 66–74 (HGVWKRKPS) are cytoplasmic. The chain crosses the membrane as a helical span at residues 75–95 (MIHSLILNLSLADISLLLFSA). Residues 96-122 (PVRATAYVKGVWDLGWFVCKSSDWFTH) lie on the Extracellular side of the membrane. A disulfide bond links Cys114 and Cys190. The chain crosses the membrane as a helical span at residues 123-143 (MCMAAKSLTFVVVAKVCFMYA). The Cytoplasmic segment spans residues 144–156 (SDPAKPVGTHNCT). A helical transmembrane segment spans residues 157–177 (IWSLLGAIWVVASLLPLPEWF). At 178–204 (FSTTRHHAGVEMCLVDVPAVAAEFMSL) the chain is on the extracellular side. Residues 205–225 (FGKLYPLLVFCLPLLLAGFYF) traverse the membrane as a helical segment. Topologically, residues 226–258 (WRAYNQCKIRCAKTQNLRNQMRSKQLTVMLLST) are cytoplasmic. The helical transmembrane segment at 259–279 (AVTSALLWLPEWIAWLWVWHL) threads the bilayer. Residues 280–289 (KAGGPMPPQG) are Extracellular-facing. A helical transmembrane segment spans residues 290-310 (FIALSQVLMFSISTVNPLIFL). Residues 311–421 (MMSEEFKAGL…HEGQETKGCN (111 aa)) are Cytoplasmic-facing. Disordered regions lie at residues 346-381 (IETL…TDKV) and 394-421 (HERD…KGCN). Composition is skewed to basic and acidic residues over residues 364-379 (DTDR…ETTD) and 409-421 (PWEH…KGCN).

The protein belongs to the G-protein coupled receptor 1 family. As to expression, exclusively expressed in neurons of the habenular complex. The expression is particularly prominent in the medial habenular nucleus, whereas the lateral habenular nucleus exhibited a lower level of expression.

The protein resides in the cell membrane. Its function is as follows. Orphan receptor. This is Probable G-protein coupled receptor 151 (Gpr151) from Rattus norvegicus (Rat).